A 367-amino-acid polypeptide reads, in one-letter code: 2-aminoethylphosphonate--pyruvate transaminase (367 aa).

Lysine 194 carries the N6-(pyridoxal phosphate)lysine modification.

This sequence belongs to the class-V pyridoxal-phosphate-dependent aminotransferase family. PhnW subfamily. As to quaternary structure, homodimer. The cofactor is pyridoxal 5'-phosphate.

The enzyme catalyses (2-aminoethyl)phosphonate + pyruvate = phosphonoacetaldehyde + L-alanine. Its function is as follows. Involved in phosphonate degradation. In Salmonella gallinarum (strain 287/91 / NCTC 13346), this protein is 2-aminoethylphosphonate--pyruvate transaminase.